The sequence spans 309 residues: General transcription factor IIH subunit 3 (309 aa).

A C4-type zinc finger spans residues cysteine 269 to cysteine 286.

This sequence belongs to the TFB4 family. As to quaternary structure, part of a TFIID-containing RNA polymerase II pre-initiation complex that is composed of TBP and at least GTF2A1, GTF2A2, GTF2E1, GTF2E2, GTF2F1, GTF2H2, GTF2H3, GTF2H4, GTF2H5, GTF2B, TCEA1, ERCC2, ERCC3, TAF1, TAF2, TAF3, TAF4, TAF5, TAF6, TAF7, TAF8, TAF9, TAF10, TAF11, TAF12 and TAF13. Component of the 7-subunit TFIIH core complex composed of XPB/ERCC3, XPD/ERCC2, GTF2H1, GTF2H2, GTF2H3, GTF2H4 and GTF2H5, which is active in NER. The core complex associates with the 3-subunit CDK-activating kinase (CAK) module composed of CCNH/cyclin H, CDK7 and MNAT1 to form the 10-subunit holoenzyme (holo-TFIIH) active in transcription. Interacts with RARA; the interaction requires prior phosphorylation of RARA on 'Ser-369' which then enhances interaction of RARA with CDK7.

Its subcellular location is the nucleus. Functionally, component of the general transcription and DNA repair factor IIH (TFIIH) core complex, which is involved in general and transcription-coupled nucleotide excision repair (NER) of damaged DNA and, when complexed to CAK, in RNA transcription by RNA polymerase II. In NER, TFIIH acts by opening DNA around the lesion to allow the excision of the damaged oligonucleotide and its replacement by a new DNA fragment. In transcription, TFIIH has an essential role in transcription initiation. When the pre-initiation complex (PIC) has been established, TFIIH is required for promoter opening and promoter escape. Phosphorylation of the C-terminal tail (CTD) of the largest subunit of RNA polymerase II by the kinase module CAK controls the initiation of transcription. The sequence is that of General transcription factor IIH subunit 3 (GTF2H3) from Bos taurus (Bovine).